The sequence spans 385 residues: GDP-mannose-dependent alpha-(1-6)-phosphatidylinositol monomannoside mannosyltransferase (385 aa).

Residues arginine 205, lysine 210, valine 262, and glutamate 299 each contribute to the GDP-alpha-D-mannose site.

Belongs to the glycosyltransferase group 1 family. Glycosyltransferase 4 subfamily.

The catalysed reaction is a 1,2-diacyl-sn-glycero-3-phospho-[alpha-D-mannopyranosyl-(1&lt;-&gt;6)-D-myo-inositol] + GDP-alpha-D-mannose = a 2,6-O-bis(alpha-D-mannopyranosyl)-1-phosphatidyl-1D-myo-inositol + GDP + H(+). The enzyme catalyses a 1,2-diacyl-sn-glycero-3-phospho-[alpha-D-6-acyl-mannopyranosyl-(1&lt;-&gt;6)-D-myo-inositol] + GDP-alpha-D-mannose = a 2-O-(alpha-D-mannosyl)-6-O-(6-O-acyl-alpha-D-mannosyl)-1-phosphatidyl-1D-myo-inositol + GDP + H(+). It functions in the pathway phospholipid metabolism; phosphatidylinositol metabolism. In terms of biological role, involved in the biosynthesis of phosphatidyl-myo-inositol mannosides (PIM) which are early precursors in the biosynthesis of lipomannans (LM) and lipoarabinomannans (LAM). Catalyzes the addition of a mannosyl residue from GDP-D-mannose (GDP-Man) to the position 6 of a phosphatidyl-myo-inositol bearing an alpha-1,2-linked mannose residue (PIM1) to generate phosphatidyl-myo-inositol bearing alpha-1,2- and alpha-1,6-linked mannose residues (Ac1PIM2). PimB also catalyzes the addition of a mannosyl residue from GDP-Man to the position 6 of phosphatidyl-myo-inositol bearing an acylated alpha-1,2-linked mannose residue (Ac1PIM1) to generate monoacylated phosphatidyl-myo-inositol bearing alpha-1,2- and alpha-1,6-linked mannose residues (Ac1PIM2). The addition of the second mannosyl residue by PimB preferentially occurs before the acylation of the mannosyl residue transferred by PimA. Also able to transfer a mannosyl residue from GDP-Man to the position 6 of a phosphatidyl-myo-inositol (PI), but this reaction is very slow. This is GDP-mannose-dependent alpha-(1-6)-phosphatidylinositol monomannoside mannosyltransferase from Mycobacterium tuberculosis (strain CDC 1551 / Oshkosh).